Here is a 177-residue protein sequence, read N- to C-terminus: Interleukin-10 (177 aa).

The signal sequence occupies residues 1 to 19 (MPSSSAVLCCLVFLAGVAA). Intrachain disulfides connect Cys-31–Cys-127 and Cys-81–Cys-133. Asn-135 carries N-linked (GlcNAc...) asparagine glycosylation.

The protein belongs to the IL-10 family. In terms of assembly, homodimer. Interacts with IL10RA and IL10RB.

It localises to the secreted. Major immune regulatory cytokine that acts on many cells of the immune system where it has profound anti-inflammatory functions, limiting excessive tissue disruption caused by inflammation. Mechanistically, IL10 binds to its heterotetrameric receptor comprising IL10RA and IL10RB leading to JAK1 and STAT2-mediated phosphorylation of STAT3. In turn, STAT3 translocates to the nucleus where it drives expression of anti-inflammatory mediators. Targets antigen-presenting cells (APCs) such as macrophages and monocytes and inhibits their release of pro-inflammatory cytokines including granulocyte-macrophage colony-stimulating factor /GM-CSF, granulocyte colony-stimulating factor/G-CSF, IL-1 alpha, IL-1 beta, IL-6, IL-8 and TNF-alpha. Also interferes with antigen presentation by reducing the expression of MHC-class II and co-stimulatory molecules, thereby inhibiting their ability to induce T cell activation. In addition, controls the inflammatory response of macrophages by reprogramming essential metabolic pathways including mTOR signaling. The chain is Interleukin-10 (IL10) from Ovis aries (Sheep).